A 203-amino-acid polypeptide reads, in one-letter code: High frequency lysogenization protein HflD homolog (203 aa).

It belongs to the HflD family.

The protein localises to the cytoplasm. It is found in the cell inner membrane. The protein is High frequency lysogenization protein HflD homolog of Pasteurella multocida (strain Pm70).